A 633-amino-acid polypeptide reads, in one-letter code: Probable potassium transport system protein Kup (633 aa).

12 consecutive transmembrane segments (helical) span residues 21–41, 61–81, 107–127, 145–165, 176–196, 219–239, 255–275, 293–313, 345–365, 371–391, 402–422, and 427–447; these read LAVG…LYAF, LVSL…VLFL, TAVL…DAMI, PTLS…LFAI, FFGP…IMHI, GFLG…AEAL, WFVL…ALVL, ALLP…QAVI, IFLP…VLSF, LATA…IMAF, LPMA…FLGA, and IHDG…IMWT.

It belongs to the HAK/KUP transporter (TC 2.A.72) family.

The protein localises to the cell inner membrane. It carries out the reaction K(+)(in) + H(+)(in) = K(+)(out) + H(+)(out). In terms of biological role, transport of potassium into the cell. Likely operates as a K(+):H(+) symporter. In Rhizobium rhizogenes (strain K84 / ATCC BAA-868) (Agrobacterium radiobacter), this protein is Probable potassium transport system protein Kup.